Here is a 483-residue protein sequence, read N- to C-terminus: Aspartyl/glutamyl-tRNA(Asn/Gln) amidotransferase subunit B (483 aa).

Belongs to the GatB/GatE family. GatB subfamily. In terms of assembly, heterotrimer of A, B and C subunits.

The catalysed reaction is L-glutamyl-tRNA(Gln) + L-glutamine + ATP + H2O = L-glutaminyl-tRNA(Gln) + L-glutamate + ADP + phosphate + H(+). It carries out the reaction L-aspartyl-tRNA(Asn) + L-glutamine + ATP + H2O = L-asparaginyl-tRNA(Asn) + L-glutamate + ADP + phosphate + 2 H(+). Allows the formation of correctly charged Asn-tRNA(Asn) or Gln-tRNA(Gln) through the transamidation of misacylated Asp-tRNA(Asn) or Glu-tRNA(Gln) in organisms which lack either or both of asparaginyl-tRNA or glutaminyl-tRNA synthetases. The reaction takes place in the presence of glutamine and ATP through an activated phospho-Asp-tRNA(Asn) or phospho-Glu-tRNA(Gln). The sequence is that of Aspartyl/glutamyl-tRNA(Asn/Gln) amidotransferase subunit B from Granulibacter bethesdensis (strain ATCC BAA-1260 / CGDNIH1).